Reading from the N-terminus, the 1298-residue chain is DNA-directed RNA polymerase subunit beta' (1298 aa).

The Zn(2+) site is built by C60, C62, C75, and C78. D535, D537, and D539 together coordinate Mg(2+). 4 residues coordinate Zn(2+): C877, C954, C961, and C964.

It belongs to the RNA polymerase beta' chain family. The RNAP catalytic core consists of 2 alpha, 1 beta, 1 beta' and 1 omega subunit. When a sigma factor is associated with the core the holoenzyme is formed, which can initiate transcription. Requires Mg(2+) as cofactor. Zn(2+) serves as cofactor.

It carries out the reaction RNA(n) + a ribonucleoside 5'-triphosphate = RNA(n+1) + diphosphate. In terms of biological role, DNA-dependent RNA polymerase catalyzes the transcription of DNA into RNA using the four ribonucleoside triphosphates as substrates. In Micrococcus luteus (strain ATCC 4698 / DSM 20030 / JCM 1464 / CCM 169 / CCUG 5858 / IAM 1056 / NBRC 3333 / NCIMB 9278 / NCTC 2665 / VKM Ac-2230) (Micrococcus lysodeikticus), this protein is DNA-directed RNA polymerase subunit beta'.